Consider the following 328-residue polypeptide: tRNA uridine(34) hydroxylase (328 aa).

The Rhodanese domain maps to 130–224 (LDKDTVVLDT…YGKDPEVQGE (95 aa)). Cys-184 (cysteine persulfide intermediate) is an active-site residue.

Belongs to the TrhO family.

The catalysed reaction is uridine(34) in tRNA + AH2 + O2 = 5-hydroxyuridine(34) in tRNA + A + H2O. Catalyzes oxygen-dependent 5-hydroxyuridine (ho5U) modification at position 34 in tRNAs. This is tRNA uridine(34) hydroxylase from Streptococcus pneumoniae (strain Taiwan19F-14).